A 551-amino-acid chain; its full sequence is Glutamate--tRNA ligase (551 aa).

The 'HIGH' region motif lies at 100–110 (PNPNGPPTLGS).

This sequence belongs to the class-I aminoacyl-tRNA synthetase family. Glutamate--tRNA ligase type 2 subfamily.

The protein localises to the cytoplasm. It carries out the reaction tRNA(Glu) + L-glutamate + ATP = L-glutamyl-tRNA(Glu) + AMP + diphosphate. Functionally, catalyzes the attachment of glutamate to tRNA(Glu) in a two-step reaction: glutamate is first activated by ATP to form Glu-AMP and then transferred to the acceptor end of tRNA(Glu). This chain is Glutamate--tRNA ligase, found in Archaeoglobus fulgidus (strain ATCC 49558 / DSM 4304 / JCM 9628 / NBRC 100126 / VC-16).